The primary structure comprises 365 residues: Protein AC54 (365 aa).

In terms of assembly, interacts with C42 and VP80. Interacts with protein 38K.

Its subcellular location is the virion. Functionally, structural protein that participates in nucleocapsid assembly. Plays an essential role in the proper localization of the major capsid protein VP39, and the minor capsid protein 38K into the capsid assembly site. This Lepidoptera (butterflies and moths) protein is Protein AC54 (AC54).